Reading from the N-terminus, the 278-residue chain is Large ribosomal subunit protein uL2 (278 aa).

The tract at residues 226 to 278 is disordered; that stretch reads MNPIDHPHGGGEGKTAAGRHPVSPWGTPSKGSRTRKNKRTSNMIVRSRYSKKG.

The protein belongs to the universal ribosomal protein uL2 family. Part of the 50S ribosomal subunit. Forms a bridge to the 30S subunit in the 70S ribosome.

Functionally, one of the primary rRNA binding proteins. Required for association of the 30S and 50S subunits to form the 70S ribosome, for tRNA binding and peptide bond formation. It has been suggested to have peptidyltransferase activity; this is somewhat controversial. Makes several contacts with the 16S rRNA in the 70S ribosome. The protein is Large ribosomal subunit protein uL2 of Nitrosomonas europaea (strain ATCC 19718 / CIP 103999 / KCTC 2705 / NBRC 14298).